The following is an 87-amino-acid chain: uncharacterized protein (87 aa).

This sequence to B.subtilis XkdR.

This is an uncharacterized protein from Bacillus subtilis (strain 168).